Consider the following 297-residue polypeptide: Phosphatidylinositol N-acetylglucosaminyltransferase subunit C (297 aa).

The next 4 helical transmembrane spans lie at 67–87 (VFVV…WLFG), 88–108 (TGLA…GGDG), 153–173 (SVFM…AAIV), and 239–259 (AFGG…LLLF).

This sequence belongs to the PIGC family. As to quaternary structure, component of the glycosylphosphatidylinositol-N-acetylglucosaminyltransferase (GPI-GnT) complex composed at least by PIGA, PIGC, PIGH, PIGP, PIGQ, PIGY and DPM2. Interacts with PIGQ. Interacts with the heterodimer PIGA:PIGH.

The protein resides in the endoplasmic reticulum membrane. It participates in glycolipid biosynthesis; glycosylphosphatidylinositol-anchor biosynthesis. Its function is as follows. Part of the glycosylphosphatidylinositol-N-acetylglucosaminyltransferase (GPI-GnT) complex that catalyzes the transfer of N-acetylglucosamine from UDP-N-acetylglucosamine to phosphatidylinositol and participates in the first step of GPI biosynthesis. This Rattus norvegicus (Rat) protein is Phosphatidylinositol N-acetylglucosaminyltransferase subunit C.